The primary structure comprises 208 residues: Glycerol-3-phosphate acyltransferase (208 aa).

5 helical membrane-spanning segments follow: residues I3 to G23, I55 to F75, Y81 to F101, I113 to V133, and I155 to F175.

Belongs to the PlsY family. Probably interacts with PlsX.

The protein localises to the cell membrane. The enzyme catalyses an acyl phosphate + sn-glycerol 3-phosphate = a 1-acyl-sn-glycero-3-phosphate + phosphate. It functions in the pathway lipid metabolism; phospholipid metabolism. Its function is as follows. Catalyzes the transfer of an acyl group from acyl-phosphate (acyl-PO(4)) to glycerol-3-phosphate (G3P) to form lysophosphatidic acid (LPA). This enzyme utilizes acyl-phosphate as fatty acyl donor, but not acyl-CoA or acyl-ACP. In Lactiplantibacillus plantarum (strain ATCC BAA-793 / NCIMB 8826 / WCFS1) (Lactobacillus plantarum), this protein is Glycerol-3-phosphate acyltransferase.